The chain runs to 394 residues: NAD(P)H-quinone oxidoreductase subunit H (394 aa).

It belongs to the complex I 49 kDa subunit family. As to quaternary structure, NDH-1 can be composed of about 15 different subunits; different subcomplexes with different compositions have been identified which probably have different functions.

It localises to the cellular thylakoid membrane. It catalyses the reaction a plastoquinone + NADH + (n+1) H(+)(in) = a plastoquinol + NAD(+) + n H(+)(out). It carries out the reaction a plastoquinone + NADPH + (n+1) H(+)(in) = a plastoquinol + NADP(+) + n H(+)(out). In terms of biological role, NDH-1 shuttles electrons from an unknown electron donor, via FMN and iron-sulfur (Fe-S) centers, to quinones in the respiratory and/or the photosynthetic chain. The immediate electron acceptor for the enzyme in this species is believed to be plastoquinone. Couples the redox reaction to proton translocation, and thus conserves the redox energy in a proton gradient. Cyanobacterial NDH-1 also plays a role in inorganic carbon-concentration. The chain is NAD(P)H-quinone oxidoreductase subunit H from Picosynechococcus sp. (strain ATCC 27264 / PCC 7002 / PR-6) (Agmenellum quadruplicatum).